The following is a 410-amino-acid chain: Lissencephaly-1 homolog B (410 aa).

The 33-residue stretch at 7-39 (QRDELNRAIADYLRSNGYEEAYSTFKKEAELDV) folds into the LisH domain. Residues 56 to 82 (TSVIRLQKKVMELESKLNEAKEEITLG) are a coiled coil. 7 WD repeats span residues 106-147 (GHRS…RTLK), 148-187 (GHTD…CIRT), 190-229 (GHDH…CVKT), 232-271 (GHRE…CKAE), 274-333 (EHEH…CLMT), 336-377 (GHDN…KTLS), and 379-410 (HEHF…WECR).

This sequence belongs to the WD repeat LIS1/nudF family. Can self-associate. Component of the cytosolic PAF-AH (I) heterotetrameric enzyme, which is composed of PAFAH1B1 (beta), PAFAH1B2 (alpha2) and PAFAH1B3 (alpha1) subunits. The catalytic activity of the enzyme resides in the alpha1 (PAFAH1B3) and alpha2 (PAFAH1B2) subunits, whereas the beta subunit (PAFAH1B1) has regulatory activity. Trimer formation is not essential for the catalytic activity. Interacts with dynein, dynactin, nde1 and ndel1. As to expression, enriched in the photoreceptor cell layer.

Its subcellular location is the cytoplasm. It is found in the cytoskeleton. The protein localises to the microtubule organizing center. The protein resides in the centrosome. Its function is as follows. Regulatory subunit (beta subunit) of the cytosolic type I platelet-activating factor (PAF) acetylhydrolase (PAF-AH (I)), an enzyme that catalyzes the hydrolyze of the acetyl group at the sn-2 position of PAF and its analogs and participates in the PAF inactivation. Regulates the PAF-AH (I) activity in a catalytic dimer composition-dependent manner. Positively regulates the activity of the minus-end directed microtubule motor protein dynein. May enhance dynein-mediated microtubule sliding by targeting dynein to the microtubule plus end. Required for several dynein- and microtubule-dependent processes such as the maintenance of Golgi integrity, the peripheral transport of microtubule fragments and the coupling of the nucleus and centrosome. May be required for proliferation of neuronal precursors and neuronal migration. Involved in the positioning of nuclei in photoreceptor cells. This is Lissencephaly-1 homolog B (pafah1b1b) from Danio rerio (Zebrafish).